The chain runs to 162 residues: NADH-quinone oxidoreductase subunit I (162 aa).

2 consecutive 4Fe-4S ferredoxin-type domains span residues 54 to 83 (RRYE…IESE) and 93 to 122 (TRYD…ETQI). Residues Cys-63, Cys-66, Cys-69, Cys-73, Cys-102, Cys-105, Cys-108, and Cys-112 each coordinate [4Fe-4S] cluster.

It belongs to the complex I 23 kDa subunit family. In terms of assembly, NDH-1 is composed of 14 different subunits. Subunits NuoA, H, J, K, L, M, N constitute the membrane sector of the complex. Requires [4Fe-4S] cluster as cofactor.

The protein resides in the cell inner membrane. It catalyses the reaction a quinone + NADH + 5 H(+)(in) = a quinol + NAD(+) + 4 H(+)(out). Functionally, NDH-1 shuttles electrons from NADH, via FMN and iron-sulfur (Fe-S) centers, to quinones in the respiratory chain. The immediate electron acceptor for the enzyme in this species is believed to be ubiquinone. Couples the redox reaction to proton translocation (for every two electrons transferred, four hydrogen ions are translocated across the cytoplasmic membrane), and thus conserves the redox energy in a proton gradient. The protein is NADH-quinone oxidoreductase subunit I of Burkholderia thailandensis (strain ATCC 700388 / DSM 13276 / CCUG 48851 / CIP 106301 / E264).